The following is a 474-amino-acid chain: MSEFSELVRILPLDQVAEIKRILSRGDPIPLQRLASLLTMVILTVNMSKKRKSSPIKLSTFTKYRRNVAKSLYYDMSSKTVFFEYHLKNTQDLQEGLEQAIAPYNFVVKVHKKPIDWQKQLSSVHERKAGHRSILSNNVGAEISKLAETKDSTWSFIERTMDLIEARTRQPTTRVAYRFLLQLTFMNCCRANDLKNADPSTFQIIADPHLGRILRAFVPETKTSIERFIYFFPCKGRCDPLLALDSYLLWVGPVPKTQTTDEETQYDYQLLQDTLLISYDRFIAKESKENIFKIPNGPKAHLGRHLMASYLGNNSLKSEATLYGNWSVERQEGVSKMADSRYMHTVKKSPPSYLFAFLSGYYKKSNQGEYVLAETLYNPLDYDKTLPITTNEKLICRRYGKNAKVIPKDALLYLYTYAQQKRKQLADPNEQNRLFSSESPAHPFLTPQSTGSSTPLTWTAPKTLSTGLMTPGEE.

The Tyr recombinase Flp-type domain maps to 135 to 421; it reads LSNNVGAEIS…LYLYTYAQQK (287 aa). The O-(3'-phospho-DNA)-tyrosine intermediate role is filled by tyrosine 342. The disordered stretch occupies residues 426-474; the sequence is ADPNEQNRLFSSESPAHPFLTPQSTGSSTPLTWTAPKTLSTGLMTPGEE. Composition is skewed to polar residues over residues 429–439 and 446–468; these read NEQNRLFSSES and TPQSTGSSTPLTWTAPKTLSTGL.

The protein belongs to the 'phage' integrase family.

Functionally, catalyzes the recombination between the large inverted repetitions of the plasmid. This is Recombinase Flp protein from Zygosaccharomyces bailii.